A 655-amino-acid chain; its full sequence is A-type voltage-gated potassium channel KCND3 (655 aa).

Over 1–182 (MAAGVAAWLP…FENPHTSTLA (182 aa)) the chain is Cytoplasmic. 2 interaction with KCNIP1 regions span residues 6–21 (AAWL…GWMP) and 70–78 (EKEFFFNED). 4 residues coordinate Zn(2+): histidine 104, cysteine 110, cysteine 131, and cysteine 132. Serine 153 carries the post-translational modification Phosphoserine. Residues 183–204 (LVFYYVTGFFIAVSVITNVVET) form a helical membrane-spanning segment. The Extracellular segment spans residues 205-223 (VPCGTVPGSKELPCGERYS). Residues 224–246 (VAFFCLDTACVMIFTVEYLLRLF) form a helical membrane-spanning segment. Over 247–253 (AAPSRYR) the chain is Cytoplasmic. The chain crosses the membrane as a helical span at residues 254-277 (FIRSVMSIIDVVAIMPYYIGLVMT). At 278–283 (NNEDVS) the chain is on the extracellular side. The helical; Voltage-sensor transmembrane segment at 284–306 (GAFVTLRVFRVFRIFKFSRHSQG) threads the bilayer. The Cytoplasmic portion of the chain corresponds to 307-318 (LRILGYTLKSCA). Residues 319 to 343 (SELGFLLFSLTMAIIIFATVMFYAE) traverse the membrane as a helical segment. Over 344–352 (KGSSASKFT) the chain is Extracellular. Positions 353 to 366 (SIPASFWYTIVTMT) form an intramembrane region, helical. Residues threonine 367, leucine 368, glycine 369, and tyrosine 370 each contribute to the K(+) site. The Selectivity filter signature appears at 367–372 (TLGYGD). Residues 367–374 (TLGYGDMV) lie within the membrane without spanning it. Residues 378–400 (IAGKIFGSICSLSGVLVIALPVP) form a helical membrane-spanning segment. At 401–655 (VIVSNFSRIY…TSNVVKVSVL (255 aa)) the chain is on the cytoplasmic side. Threonine 459 carries the phosphothreonine modification. Residues 470–487 (SLIESQHHHLLHCLEKTT) form an interaction with KCNIP1 and KCNIP2 region. The segment at 474–489 (SQHHHLLHCLEKTTGL) is mediates dendritic targeting. The interval 523-565 (SSMQNYPSTRSPSLSSHSGLTTTCCSRRSKKTTHLPNSNLPAT) is disordered. Positions 529 to 548 (PSTRSPSLSSHSGLTTTCCS) are enriched in low complexity. Residue serine 569 is modified to Phosphoserine; by CaMK2D. Serine 585 is modified (phosphoserine). Positions 616 to 647 (SIPTPPALTPEGESRPPPASPGPNTNIPSITS) are disordered. The span at 637 to 647 (GPNTNIPSITS) shows a compositional bias: polar residues.

It belongs to the potassium channel family. D (Shal) (TC 1.A.1.2) subfamily. Kv4.3/KCND3 sub-subfamily. In terms of assembly, homotetramer. Heterotetramer with KCND2. Associates with the regulatory subunits KCNIP3 and KCNIP4. Interacts with KCNE1, KCNE2, SCN1B and KCNAB1 and DLG1. Component of heteromultimeric potassium channels. Identified in potassium channel complexes containing KCND1, KCND2, KCND3, KCNIP1, KCNIP2, KCNIP3, KCNIP4, DPP6 and DPP10. Interacts with KCNIP1; each KCNIP1 monomer interacts with two adjacent KCND3 subunits, through both the N-terminal inactivation ball of a KCND3 subunit and a C-terminal helix from the adjacent KCND3 subunit, clamping them together; this interaction stabilizes the tetrameric form and modulates the channel gating kinetics namely channel activation and inactivation kinetics and rate of recovery from inactivation. Interacts with DPP6; this interaction modulates the channel gating kinetics namely channel activation and inactivation kinetics and rate of recovery from inactivation. Interacts with KCNIP2; each KCNIP2 monomer interacts with two adjacent KCND3 subunits, through both the N-terminal inactivation ball of a KCND3 subunit and a C-terminal helix from the adjacent KCND3 subunit, clamping them together; this interaction modulates the channel gating kinetics. Post-translationally, regulated through phosphorylation at Ser-569 by CaMK2D. Highly expressed in brain, in particular in the retrosplenial cortex, medial habenula, anterior thalamus, hippocampus, cerebellum and lateral geniculate and superior colliculus. Highly expressed in heart atrium (at protein level) and throughout the ventricle wall, in lung and vas deferens.

It localises to the cell membrane. Its subcellular location is the sarcolemma. The protein localises to the cell projection. It is found in the dendrite. The catalysed reaction is K(+)(in) = K(+)(out). Its function is as follows. Pore-forming (alpha) subunit of voltage-gated A-type potassium channels that mediates transmembrane potassium transport in excitable membranes, in brain and heart. In cardiomyocytes, may generate the transient outward potassium current I(To). In neurons, may conduct the transient subthreshold somatodendritic A-type potassium current (ISA). Kinetics properties are characterized by fast activation at subthreshold membrane potentials, rapid inactivation, and quick recovery from inactivation. Channel properties are modulated by interactions with regulatory subunits. Interaction with the regulatory subunits KCNIP1 or KCNIP2 modulates the channel gating kinetics namely channel activation and inactivation kinetics and rate of recovery from inactivation. Likewise, interaction with DPP6 modulates the channel gating kinetics namely channel activation and inactivation kinetics. This Rattus norvegicus (Rat) protein is A-type voltage-gated potassium channel KCND3.